The primary structure comprises 127 residues: uncharacterized protein (127 aa).

2 consecutive transmembrane segments (helical) span residues 42–62 (LLIS…IAFI) and 78–98 (GLPI…YYFL).

It is found in the membrane. This is an uncharacterized protein from Schizosaccharomyces pombe (strain 972 / ATCC 24843) (Fission yeast).